A 765-amino-acid chain; its full sequence is Kinesin-like protein KIN-14S (765 aa).

A Kinesin motor domain is found at 132 to 456 (NIRVFCRCRP…LNFASRVRGI (325 aa)). An ATP-binding site is contributed by 215-222 (GQTGTGKT). Residues 469–534 (ELLKSKQMAE…ERKTRIKQES (66 aa)) are a coiled coil. Disordered stretches follow at residues 581–613 (MPQQ…SSMD) and 654–678 (LRPE…RGDP). The span at 602 to 611 (NNNSNRRSSS) shows a compositional bias: low complexity.

Belongs to the TRAFAC class myosin-kinesin ATPase superfamily. Kinesin family. KIN-14 subfamily.

This chain is Kinesin-like protein KIN-14S, found in Arabidopsis thaliana (Mouse-ear cress).